Here is a 338-residue protein sequence, read N- to C-terminus: MKVFYDKDCDLSLIKGKTVAIIGYGSQGHAHAQNLNDSGVKVVVGLRKGGASWPKVEKAGLKVAEVADAVKAADVVMILLPDEQIGAVYANDVAPNIKQGASLVFAHGFNVHYGAVIPRADLDVWMVAPKAPGHTVRNTYTQGGGVPHLVAVHQDKSGKARDLALSYAMANGGGKAGIIETNFREETETDLFGEQAVLCGGTVELIKAGFETLVEAGYAPEMAYFECLHELKLIVDLIYEGGIANMNYSISNNAEYGEYVTGPNIVTSATKEAMRKCLKDIQTGEYAKSFLLENRVGAPTLLSRRRLNAEHQIEIVGEKLRAMMPWIAKNKLVDQTRN.

One can recognise a KARI N-terminal Rossmann domain in the interval 1 to 181 (MKVFYDKDCD…GGGKAGIIET (181 aa)). NADP(+) contacts are provided by residues 24–27 (YGSQ), Arg-47, and Ser-52. His-107 is an active-site residue. An NADP(+)-binding site is contributed by Gly-133. Residues 182–327 (NFREETETDL…EKLRAMMPWI (146 aa)) enclose the KARI C-terminal knotted domain. Positions 190, 194, 226, and 230 each coordinate Mg(2+). Residue Ser-251 coordinates substrate.

Belongs to the ketol-acid reductoisomerase family. The cofactor is Mg(2+).

It carries out the reaction (2R)-2,3-dihydroxy-3-methylbutanoate + NADP(+) = (2S)-2-acetolactate + NADPH + H(+). The catalysed reaction is (2R,3R)-2,3-dihydroxy-3-methylpentanoate + NADP(+) = (S)-2-ethyl-2-hydroxy-3-oxobutanoate + NADPH + H(+). Its pathway is amino-acid biosynthesis; L-isoleucine biosynthesis; L-isoleucine from 2-oxobutanoate: step 2/4. It functions in the pathway amino-acid biosynthesis; L-valine biosynthesis; L-valine from pyruvate: step 2/4. Its function is as follows. Involved in the biosynthesis of branched-chain amino acids (BCAA). Catalyzes an alkyl-migration followed by a ketol-acid reduction of (S)-2-acetolactate (S2AL) to yield (R)-2,3-dihydroxy-isovalerate. In the isomerase reaction, S2AL is rearranged via a Mg-dependent methyl migration to produce 3-hydroxy-3-methyl-2-ketobutyrate (HMKB). In the reductase reaction, this 2-ketoacid undergoes a metal-dependent reduction by NADPH to yield (R)-2,3-dihydroxy-isovalerate. In Polaromonas sp. (strain JS666 / ATCC BAA-500), this protein is Ketol-acid reductoisomerase (NADP(+)).